Reading from the N-terminus, the 712-residue chain is Polyribonucleotide nucleotidyltransferase (712 aa).

Residues Asp487 and Asp493 each contribute to the Mg(2+) site. The 60-residue stretch at 554 to 613 folds into the KH domain; the sequence is PKIITMTINPDKIRDVIGPSGKQINKIIEETGVKIDIEQDGTVFISSINQEMNDKAKKII. Positions 623-691 constitute an S1 motif domain; it reads GEIYEGKVKR…KQGRVNLSRK (69 aa).

Belongs to the polyribonucleotide nucleotidyltransferase family. Mg(2+) serves as cofactor.

It is found in the cytoplasm. The catalysed reaction is RNA(n+1) + phosphate = RNA(n) + a ribonucleoside 5'-diphosphate. Its function is as follows. Involved in mRNA degradation. Catalyzes the phosphorolysis of single-stranded polyribonucleotides processively in the 3'- to 5'-direction. The polypeptide is Polyribonucleotide nucleotidyltransferase (Bacillus cereus (strain ATCC 10987 / NRS 248)).